A 508-amino-acid polypeptide reads, in one-letter code: ATP synthase subunit alpha, chloroplastic (508 aa).

172–179 is a binding site for ATP; the sequence is GDRQTGKT.

Belongs to the ATPase alpha/beta chains family. As to quaternary structure, F-type ATPases have 2 components, CF(1) - the catalytic core - and CF(0) - the membrane proton channel. CF(1) has five subunits: alpha(3), beta(3), gamma(1), delta(1), epsilon(1). CF(0) has four main subunits: a, b, b' and c.

The protein resides in the plastid. Its subcellular location is the chloroplast thylakoid membrane. It carries out the reaction ATP + H2O + 4 H(+)(in) = ADP + phosphate + 5 H(+)(out). Its function is as follows. Produces ATP from ADP in the presence of a proton gradient across the membrane. The alpha chain is a regulatory subunit. In Psilotum nudum (Whisk fern), this protein is ATP synthase subunit alpha, chloroplastic.